Reading from the N-terminus, the 494-residue chain is Protein transport protein Sec61 subunit alpha (494 aa).

10 helical membrane-spanning segments follow: residues 36-56, 79-99, 122-142, 147-167, 177-197, 249-269, 294-314, 359-379, 426-446, and 450-470; these read LWTSIVVFLYLVCCQIPLYGI, LMELGISPIVTSGLVMQLLAG, LLGILITIGESVAYVLSGMYG, LGAGNAILIIVQLFTSGIIVI, YGIGSAISLFIATNVCESIVW, LLATVLVFVLVVYFQGFQVEL, MPIILQTALVSNLYFISQILY, IVSDPVHALLYIIFILASCAL, AAFGGMCIGALSIVADFMGAI, and TGILLAVTTIYQSWETILLAV.

It belongs to the SecY/SEC61-alpha family. Heterotrimeric complex composed of SEC61-alpha, SEC61-beta and SEC61-gamma.

The protein localises to the endoplasmic reticulum membrane. Its function is as follows. Appears to play a crucial role in the insertion of secretory and membrane polypeptides into the ER. It is required for assembly of membrane and secretory proteins. This is Protein transport protein Sec61 subunit alpha from Pyrenomonas salina.